Consider the following 83-residue polypeptide: Small ribosomal subunit protein uS17 (83 aa).

Belongs to the universal ribosomal protein uS17 family. In terms of assembly, part of the 30S ribosomal subunit.

Functionally, one of the primary rRNA binding proteins, it binds specifically to the 5'-end of 16S ribosomal RNA. The sequence is that of Small ribosomal subunit protein uS17 from Nitratiruptor sp. (strain SB155-2).